The chain runs to 111 residues: Probable 4-amino-4-deoxy-L-arabinose-phosphoundecaprenol flippase subunit ArnE (111 aa).

The next 3 membrane-spanning stretches (helical) occupy residues 38 to 58, 61 to 81, and 91 to 111; these read LWLG…LLVL, LPVG…TLAA, and PRHW…GSAA. In terms of domain architecture, EamA spans 40 to 109; sequence LGLALICMGA…IISGIIILGS (70 aa).

It belongs to the ArnE family. As to quaternary structure, heterodimer of ArnE and ArnF.

It is found in the cell inner membrane. It functions in the pathway bacterial outer membrane biogenesis; lipopolysaccharide biosynthesis. Translocates 4-amino-4-deoxy-L-arabinose-phosphoundecaprenol (alpha-L-Ara4N-phosphoundecaprenol) from the cytoplasmic to the periplasmic side of the inner membrane. The protein is Probable 4-amino-4-deoxy-L-arabinose-phosphoundecaprenol flippase subunit ArnE of Salmonella enteritidis PT4 (strain P125109).